Consider the following 283-residue polypeptide: Transmembrane protein 119 (283 aa).

The signal sequence occupies residues Met1–Ala25. The Extracellular portion of the chain corresponds to Arg26–Met96. Ser41 is a glycosylation site (O-linked (Xyl...) (chondroitin sulfate) serine). Residues Glu43–Pro52 are compositionally biased toward low complexity. The disordered stretch occupies residues Glu43 to Gly76. A helical membrane pass occupies residues Leu97–Ile117. Over Thr118–Val283 the chain is Cytoplasmic. Disordered regions lie at residues Lys136–Ser168 and Leu183–Val283. Basic and acidic residues-rich tracts occupy residues Val153–Glu164 and Arg198–Gln213. Residues Gly238–Gln264 show a composition bias toward low complexity. Ser272 carries the post-translational modification Phosphoserine.

In terms of assembly, interacts with SMAD1, SMAD5 and RUNX2. As to expression, expressed in brain microglia (at protein level). Detected in urine (at protein level). Elevated expression levels seen in the brain of patients with Alzheimer disease. Expressed by osteoblast-like cells in bone tissues and follicular dendritic cells in lymphoid tissues.

It localises to the cell membrane. The protein resides in the cytoplasm. It is found in the endoplasmic reticulum membrane. The protein localises to the secreted. Plays an important role in bone formation and normal bone mineralization. Promotes the differentiation of myoblasts into osteoblasts. May induce the commitment and differentiation of myoblasts into osteoblasts through an enhancement of BMP2 production and interaction with the BMP-RUNX2 pathway. Up-regulates the expression of ATF4, a transcription factor which plays a central role in osteoblast differentiation. Essential for normal spermatogenesis and late testicular differentiation. The protein is Transmembrane protein 119 (TMEM119) of Homo sapiens (Human).